A 509-amino-acid chain; its full sequence is Scavenger receptor class B member 1 (509 aa).

Topologically, residues 1 to 11 are cytoplasmic; sequence MGVSSRARWVA. The chain crosses the membrane as a helical span at residues 12–32; it reads LGLGVLGLLCAALGVIMILMV. The Extracellular portion of the chain corresponds to 33-440; that stretch reads PSLIKQQVLK…YTQLVLMPQV (408 aa). N-linked (GlcNAc...) asparagine glycans are attached at residues Asn-102, Asn-108, Asn-116, Asn-173, Asn-212, Asn-227, Asn-255, Asn-310, Asn-330, and Asn-383. A disulfide bridge links Cys-251 with Cys-384. The helical transmembrane segment at 441-461 threads the bilayer; that stretch reads LHYAQYVLLGLGGLLLLVPII. The Cytoplasmic segment spans residues 462-509; the sequence is YQLRSQEKCFLFWSGSKKGSQDKEAMQAYSESLMSPAAKGTVLQEAKL.

Belongs to the CD36 family. In terms of assembly, the C-terminal region binds to PDZK1. In terms of processing, N-glycosylated. Post-translationally, the six cysteines of the extracellular domain are all involved in intramolecular disulfide bonds.

The protein localises to the cell membrane. It localises to the membrane. Its subcellular location is the caveola. Receptor for different ligands such as phospholipids, cholesterol ester, lipoproteins, phosphatidylserine and apoptotic cells. Receptor for HDL, mediating selective uptake of cholesteryl ether and HDL-dependent cholesterol efflux. Also facilitates the flux of free and esterified cholesterol between the cell surface and apoB-containing lipoproteins and modified lipoproteins, although less efficiently than HDL. May be involved in the phagocytosis of apoptotic cells, via its phosphatidylserine binding activity. This is Scavenger receptor class B member 1 (Scarb1) from Rattus norvegicus (Rat).